The following is a 310-amino-acid chain: Protein BIG GRAIN 1 (310 aa).

Residues Ser-77 to Ser-140 form a disordered region. The span at Ser-90 to Ala-106 shows a compositional bias: low complexity.

The protein belongs to the BIG GRAIN 1 (BG1) plant protein family. As to expression, mostly expressed in the vascular tissues of leaves, culms and young panicles, especially in hulls.

The protein resides in the cell membrane. Functionally, involved in auxin transport. Positive regulator of the auxin signaling pathway involved in gravitropism, plant growth and grain development. The protein is Protein BIG GRAIN 1 of Oryza sativa subsp. japonica (Rice).